The sequence spans 438 residues: GTPase Der (438 aa).

2 EngA-type G domains span residues 4–168 (PIVA…PAVP) and 176–351 (LKVA…EAAN). GTP contacts are provided by residues 10–17 (GRPNVGKS), 57–61 (DTGGI), 120–123 (NKVE), 182–189 (GRPNVGKS), 229–233 (DTAGM), and 294–297 (NKWD). One can recognise a KH-like domain in the interval 352 to 436 (RRVATGTLNA…PIRLIFRRGR (85 aa)).

The protein belongs to the TRAFAC class TrmE-Era-EngA-EngB-Septin-like GTPase superfamily. EngA (Der) GTPase family. Associates with the 50S ribosomal subunit.

In terms of biological role, GTPase that plays an essential role in the late steps of ribosome biogenesis. The protein is GTPase Der of Moorella thermoacetica (strain ATCC 39073 / JCM 9320).